A 647-amino-acid chain; its full sequence is Dihydrolipoyllysine-residue acetyltransferase component of pyruvate dehydrogenase complex (647 aa).

Residues 1 to 86 constitute a mitochondrion transit peptide; it reads MWRVCARRAQ…LWGSPSRRWY (86 aa). Positions 91-167 constitute a Lipoyl-binding 1 domain; it reads HQKVPLPSLS…PVGAIICITV (77 aa). S100 is subject to Phosphoserine. An N6-lipoyllysine modification is found at K132. The segment at 184–216 is disordered; that stretch reads SAAPAPPAAPAPTPAAPAPSPTPSAQAPGSSYP. Residues 187–205 are compositionally biased toward pro residues; that stretch reads PAPPAAPAPTPAAPAPSPT. The Lipoyl-binding 2 domain maps to 218 to 294; that stretch reads HMQVLLPALS…PLGTPLCIIV (77 aa). Residue K259 is modified to N6-lipoyllysine. Residues 311–352 are disordered; it reads VTDLKPPAPPPIPSPAAPVPPAPQPVAPPPSAPRPAAPAGPK. A compositionally biased stretch (pro residues) spans 316–348; that stretch reads PPAPPPIPSPAAPVPPAPQPVAPPPSAPRPAAP. Residues 356–393 form the Peripheral subunit-binding (PSBD) domain; that stretch reads FVSPLAKKLAAEKGIDLTQVKGTGPDGRIIKKDIDSFV. R461 is a CoA binding site. K466 is modified (N6-acetyllysine). K473 is modified (N6-succinyllysine). S475 serves as a coordination point for CoA. An N6-succinyllysine modification is found at K547. S566, N567, and G591 together coordinate CoA. Residues H620 and D624 contribute to the active site.

It belongs to the 2-oxoacid dehydrogenase family. In terms of assembly, part of the pyruvate dehydrogenase complex (PDHc) that is a multi-enzyme complex composed of multiple copies of three enzymes, pyruvate dehydrogenase (subunits PDH1A and PDHB, E1 component), dihydrolipoamide acetyltransferase (DLAT, E2 component), and dihydrolipoamide dehydrogenase (DLD, E3 component) to which is added an additional protein the E3-binding protein (PDHX, E3BP). In terms of structural architecture, the E2 and E3BP components assemble into a 60meric central core with icosahedral symmetry. The central core is decorated with E1 and E3 proteins. Currently, two alternative models for the E2:E3BP stoichiometry are considered as being either 48:12 (E2(48)-E3BP(12)) or 40:20 (E2(40)-E3BP(20)). Interacts with PDK2 and PDK3. Interacts with SIRT4. Interacts with PDHB. The cofactor is (R)-lipoate. Delipoylated at Lys-132 and Lys-259 by SIRT4, delipoylation decreases the PHD complex activity.

Its subcellular location is the mitochondrion matrix. It catalyses the reaction N(6)-[(R)-dihydrolipoyl]-L-lysyl-[protein] + acetyl-CoA = N(6)-[(R)-S(8)-acetyldihydrolipoyl]-L-lysyl-[protein] + CoA. Functionally, as part of the pyruvate dehydrogenase complex, catalyzes the transfers of an acetyl group to a lipoic acid moiety. The pyruvate dehydrogenase complex, catalyzes the overall conversion of pyruvate to acetyl-CoA and CO(2), and thereby links cytoplasmic glycolysis and the mitochondrial tricarboxylic acid (TCA) cycle. The chain is Dihydrolipoyllysine-residue acetyltransferase component of pyruvate dehydrogenase complex from Bos taurus (Bovine).